Reading from the N-terminus, the 285-residue chain is Type II restriction enzyme Cfr10I (285 aa).

Mg(2+)-binding residues include Asp-134 and Glu-204.

In terms of assembly, homodimer. Requires Mg(2+) as cofactor.

It carries out the reaction Endonucleolytic cleavage of DNA to give specific double-stranded fragments with terminal 5'-phosphates.. An F and P subtype restriction enzyme that recognizes the double-stranded sequence 5'-RCCGGY-3' and cleaves after R-1. This chain is Type II restriction enzyme Cfr10I (cfr10IR), found in Citrobacter freundii.